The following is a 101-amino-acid chain: Protein RALF-like 14 (101 aa).

Positions 1 to 21 (MKLLIFAVIISVVLFPVLVSS) are cleaved as a signal peptide. A propeptide spans 22–56 (RTIKCDQLSGKCINGEEKEIMNMRLGLDVSSRRIL) (removed in mature form). Cysteine 90 and cysteine 96 are disulfide-bonded.

Belongs to the plant rapid alkalinization factor (RALF) family. In terms of processing, proteolytically cleaved, probably by S1P, a subtilisin-like serine protease (subtilase).

The protein resides in the secreted. Functionally, cell signaling peptide that may regulate plant stress, growth, and development. Mediates a rapid alkalinization of extracellular space by mediating a transient increase in the cytoplasmic Ca(2+) concentration leading to a calcium-dependent signaling events through a cell surface receptor and a concomitant activation of some intracellular mitogen-activated protein kinases. The protein is Protein RALF-like 14 (RALFL14) of Arabidopsis thaliana (Mouse-ear cress).